The following is a 548-amino-acid chain: Chaperonin GroEL (548 aa).

ATP contacts are provided by residues 30–33 (TLGP), Lys51, 87–91 (DGTTT), Gly415, 479–481 (NAA), and Asp495.

The protein belongs to the chaperonin (HSP60) family. In terms of assembly, forms a cylinder of 14 subunits composed of two heptameric rings stacked back-to-back. Interacts with the co-chaperonin GroES.

It is found in the cytoplasm. The enzyme catalyses ATP + H2O + a folded polypeptide = ADP + phosphate + an unfolded polypeptide.. Functionally, together with its co-chaperonin GroES, plays an essential role in assisting protein folding. The GroEL-GroES system forms a nano-cage that allows encapsulation of the non-native substrate proteins and provides a physical environment optimized to promote and accelerate protein folding. This chain is Chaperonin GroEL, found in Klebsiella pneumoniae subsp. pneumoniae (strain ATCC 700721 / MGH 78578).